We begin with the raw amino-acid sequence, 232 residues long: Large ribosomal subunit protein uL1 (232 aa).

The protein belongs to the universal ribosomal protein uL1 family. In terms of assembly, part of the 50S ribosomal subunit.

Functionally, binds directly to 23S rRNA. The L1 stalk is quite mobile in the ribosome, and is involved in E site tRNA release. Protein L1 is also a translational repressor protein, it controls the translation of the L11 operon by binding to its mRNA. The sequence is that of Large ribosomal subunit protein uL1 from Paraburkholderia phymatum (strain DSM 17167 / CIP 108236 / LMG 21445 / STM815) (Burkholderia phymatum).